The following is a 156-amino-acid chain: Arginine repressor (156 aa).

It belongs to the ArgR family.

The protein resides in the cytoplasm. It functions in the pathway amino-acid biosynthesis; L-arginine biosynthesis [regulation]. Functionally, regulates arginine biosynthesis genes. The chain is Arginine repressor from Vibrio cholerae serotype O1 (strain ATCC 39315 / El Tor Inaba N16961).